Here is a 272-residue protein sequence, read N- to C-terminus: Centromere protein V-like protein 1 (272 aa).

The segment covering methionine 1 to arginine 17 has biased composition (basic residues). Disordered stretches follow at residues methionine 1–alanine 23 and arginine 65–aspartate 95. Positions alanine 79 to serine 90 are enriched in pro residues. The 114-residue stretch at histidine 133–glutamate 246 folds into the CENP-V/GFA domain. Zn(2+) contacts are provided by cysteine 137, cysteine 139, cysteine 157, cysteine 159, cysteine 162, cysteine 201, and cysteine 204. A disordered region spans residues glycine 240–glutamine 272.

It belongs to the Gfa family. Zn(2+) is required as a cofactor.

In Homo sapiens (Human), this protein is Centromere protein V-like protein 1.